We begin with the raw amino-acid sequence, 44 residues long: Cytochrome b559 subunit beta (44 aa).

Residues 19-35 (WLSIHALAVPTIFFLGS) traverse the membrane as a helical segment. Heme is bound at residue H23.

It belongs to the PsbE/PsbF family. As to quaternary structure, heterodimer of an alpha subunit and a beta subunit. PSII is composed of 1 copy each of membrane proteins PsbA, PsbB, PsbC, PsbD, PsbE, PsbF, PsbH, PsbI, PsbJ, PsbK, PsbL, PsbM, PsbT, PsbX, PsbY, PsbZ, Psb30/Ycf12, at least 3 peripheral proteins of the oxygen-evolving complex and a large number of cofactors. It forms dimeric complexes. Heme b serves as cofactor.

It is found in the plastid. It localises to the chloroplast thylakoid membrane. This b-type cytochrome is tightly associated with the reaction center of photosystem II (PSII). PSII is a light-driven water:plastoquinone oxidoreductase that uses light energy to abstract electrons from H(2)O, generating O(2) and a proton gradient subsequently used for ATP formation. It consists of a core antenna complex that captures photons, and an electron transfer chain that converts photonic excitation into a charge separation. The polypeptide is Cytochrome b559 subunit beta (Tetradesmus obliquus (Green alga)).